Consider the following 747-residue polypeptide: MDANQKLLDFAKLLNQKNDSRPVIEKLKDNISGDLLNYFLNLLEEISKLDTDQPLSVTSLRCLQLFVHLTFLLGVYTQLPKEMLSQAKIKALPIYTPKKNLVQIYNILLPLLLTPSLLQGPLNLHYADLLLLHLYLLNCHEQGSLIEEPRPLFLDPSWKEKVTSIMSPQMVDPSKMISSCLSLLQPNVDNWLQDKLKHYLTTCLCRETGVQGFLKVYMQAQPNSIERARQAAHLISSVPKDISPQKYFSCILPQVWSLFSTQPRLASQLIIAVTNTHCDIVTSFLLKKLQILEAPKVIDLSPFENALDVLQVLVYIQNDDIIRICESCVPSLLHLQENTTLRSKVQDILLRIISVCGTKSLLRNLTNAKHLRIFCERLTKSQLAMFLPNLLEIWVQQPPDKRLELLELVQYALSNVDSDEIPSNVMLSVCTNLINEVASQNKYSSTEISQITTNREVEEENEEILLVLLNIISSVIGRNAELDLENPISSLLPALEQLSNYSNREISDLAKDVYKTLIQSKDDYSLALSYTQSDLVPVRGQGVYMLRKLIEKKDDRINPVRVLHVLINLLRDENSYVHLNVISAVVSLCDKYDDSLIRLLKEYTNTNKFTVDETLLIGQAIYQTMERQGELVAKFYGQIEQTCLSMLNNENTDIKISSLNIARLLCQMTSSDAFIESAKNILILEMGSDKQFLRRAAVQLLDSCKHLPDSVITTLSYVGSHDKDDFIKESCLNILANQADAAKYYLQ.

HEAT repeat units follow at residues 37–75 (NYFLNLLEEISKLDTDQPLSVTSLRCLQLFVHLTFLLGV), 103–141 (QIYNILLPLLLTPSLLQGPLNLHYADLLLLHLYLLNCHE), 320–358 (DIIRICESCVPSLLHLQENTTLRSKVQDILLRIISVCGT), 381–418 (SQLAMFLPNLLEIWVQQPPDKRLELLELVQYALSNVDS), 459–485 (EENEEILLVLLNIISSVIGRNAELDLE), 486–523 (NPISSLLPALEQLSNYSNREISDLAKDVYKTLIQSKDD), and 557–594 (INPVRVLHVLINLLRDENSYVHLNVISAVVSLCDKYDD).

The protein belongs to the Tango6 family. In terms of assembly, interacts with RNA polymerase II subunits. Interacts with nuclear pore complex subunits.

Its subcellular location is the cytoplasm. It localises to the nucleus. In terms of biological role, required for the cytoplasmic assembly and the nuclear import of RNA polymerase II. This is RNA polymerase II assembly factor rtp1 from Schizosaccharomyces pombe (strain 972 / ATCC 24843) (Fission yeast).